Reading from the N-terminus, the 344-residue chain is Protein Tob2 (344 aa).

Disordered stretches follow at residues 144–169 (GSQD…FIPR) and 191–225 (MKKG…SPTN). The segment covering 145-164 (SQDSSLSNSPSPSFGQSPSP) has biased composition (low complexity). Positions 194 to 210 (GGGAASGGGVASSGAGG) are enriched in gly residues. Positions 211-225 (QQPPQQPRMARSPTN) are enriched in low complexity. The residue at position 254 (Ser-254) is a Phosphoserine.

Belongs to the BTG family. As to quaternary structure, associates with CAF1. As to expression, ubiquitous.

It localises to the cytoplasm. Functionally, anti-proliferative protein inhibits cell cycle progression from the G0/G1 to S phases. This chain is Protein Tob2 (TOB2), found in Homo sapiens (Human).